The primary structure comprises 892 residues: Alanine--tRNA ligase (892 aa).

Residues His580, His584, Cys682, and His686 each contribute to the Zn(2+) site.

Belongs to the class-II aminoacyl-tRNA synthetase family. The cofactor is Zn(2+).

It is found in the cytoplasm. It carries out the reaction tRNA(Ala) + L-alanine + ATP = L-alanyl-tRNA(Ala) + AMP + diphosphate. Catalyzes the attachment of alanine to tRNA(Ala) in a two-step reaction: alanine is first activated by ATP to form Ala-AMP and then transferred to the acceptor end of tRNA(Ala). Also edits incorrectly charged Ser-tRNA(Ala) and Gly-tRNA(Ala) via its editing domain. In Salinispora tropica (strain ATCC BAA-916 / DSM 44818 / JCM 13857 / NBRC 105044 / CNB-440), this protein is Alanine--tRNA ligase.